A 250-amino-acid chain; its full sequence is Flavin-dependent thymidylate synthase (250 aa).

In terms of domain architecture, ThyX spans 7–233 (LRVQLIAKTD…PSIFGDFDIA (227 aa)). FAD-binding positions include S71, 95 to 97 (RHR), and Q103. DUMP contacts are provided by residues 92–95 (ELIR), 103–107 (QLSQR), and R172. The short motif at 95-105 (RHRHFSYSQLS) is the ThyX motif element. Residues 188-190 (NYR) and H194 each bind FAD. R199 contributes to the dUMP binding site. The active-site Involved in ionization of N3 of dUMP, leading to its activation is R199.

This sequence belongs to the thymidylate synthase ThyX family. Homotetramer. It depends on FAD as a cofactor.

It carries out the reaction dUMP + (6R)-5,10-methylene-5,6,7,8-tetrahydrofolate + NADPH + H(+) = dTMP + (6S)-5,6,7,8-tetrahydrofolate + NADP(+). It functions in the pathway pyrimidine metabolism; dTTP biosynthesis. Functionally, catalyzes the reductive methylation of 2'-deoxyuridine-5'-monophosphate (dUMP) to 2'-deoxythymidine-5'-monophosphate (dTMP) while utilizing 5,10-methylenetetrahydrofolate (mTHF) as the methyl donor, and NADPH and FADH(2) as the reductant. In Mycobacteroides abscessus (strain ATCC 19977 / DSM 44196 / CCUG 20993 / CIP 104536 / JCM 13569 / NCTC 13031 / TMC 1543 / L948) (Mycobacterium abscessus), this protein is Flavin-dependent thymidylate synthase.